The sequence spans 406 residues: COP9 signalosome complex subunit 4 (406 aa).

A2 bears the N-acetylalanine mark. K25 bears the N6-acetyllysine mark. The region spanning 197 to 366 (YRRKFIEAAQ…GIVHFETREA (170 aa)) is the PCI domain.

Belongs to the CSN4 family. As to quaternary structure, component of the CSN complex, composed of COPS1/GPS1, COPS2, COPS3, COPS4, COPS5, COPS6, COPS7 (COPS7A or COPS7B), COPS8 and COPS9 isoform 1. In the complex, it probably interacts directly with COPS1, COPS2, COPS3, COPS5, COPS6, COPS7 (COPS7A or COPS7B) and COPS8. Interacts with TOR1A; the interaction is direct and associates TOR1A and SNAPIN with the CSN complex. Interacts with STON2; controls STON2 neddylation levels. Interacts with ERCC6.

It is found in the cytoplasm. Its subcellular location is the nucleus. The protein resides in the cytoplasmic vesicle. The protein localises to the secretory vesicle. It localises to the synaptic vesicle. Its function is as follows. Component of the COP9 signalosome complex (CSN), a complex involved in various cellular and developmental processes. The CSN complex is an essential regulator of the ubiquitin (Ubl) conjugation pathway by mediating the deneddylation of the cullin subunits of SCF-type E3 ligase complexes, leading to decrease the Ubl ligase activity of SCF-type complexes such as SCF, CSA or DDB2. Also involved in the deneddylation of non-cullin subunits such as STON2. The complex is also involved in phosphorylation of p53/TP53, c-jun/JUN, IkappaBalpha/NFKBIA, ITPK1, IRF8/ICSBP and SNAPIN, possibly via its association with CK2 and PKD kinases. CSN-dependent phosphorylation of TP53 and JUN promotes and protects degradation by the Ubl system, respectively. The chain is COP9 signalosome complex subunit 4 (COPS4) from Homo sapiens (Human).